We begin with the raw amino-acid sequence, 473 residues long: UDP-N-acetylmuramate--L-alanine ligase (473 aa).

114–120 lines the ATP pocket; the sequence is GTHGKTT.

Belongs to the MurCDEF family.

Its subcellular location is the cytoplasm. The catalysed reaction is UDP-N-acetyl-alpha-D-muramate + L-alanine + ATP = UDP-N-acetyl-alpha-D-muramoyl-L-alanine + ADP + phosphate + H(+). Its pathway is cell wall biogenesis; peptidoglycan biosynthesis. Cell wall formation. This is UDP-N-acetylmuramate--L-alanine ligase from Chlorobium luteolum (strain DSM 273 / BCRC 81028 / 2530) (Pelodictyon luteolum).